The chain runs to 220 residues: Thiopurine S-methyltransferase (220 aa).

S-adenosyl-L-methionine contacts are provided by Trp-10, Leu-45, Glu-66, and Arg-123.

It belongs to the class I-like SAM-binding methyltransferase superfamily. TPMT family.

The protein resides in the cytoplasm. It carries out the reaction S-adenosyl-L-methionine + a thiopurine = S-adenosyl-L-homocysteine + a thiopurine S-methylether.. The polypeptide is Thiopurine S-methyltransferase (Nitrosospira multiformis (strain ATCC 25196 / NCIMB 11849 / C 71)).